Here is a 260-residue protein sequence, read N- to C-terminus: 3'-5' ssDNA/RNA exonuclease TatD (260 aa).

3 residues coordinate a divalent metal cation: E92, H128, and H153.

The protein belongs to the metallo-dependent hydrolases superfamily. TatD-type hydrolase family. TatD subfamily. Monomer. It depends on Mg(2+) as a cofactor.

It is found in the cytoplasm. Its function is as follows. 3'-5' exonuclease that prefers single-stranded DNA and RNA. May play a role in the H(2)O(2)-induced DNA damage repair. This is 3'-5' ssDNA/RNA exonuclease TatD from Yersinia pseudotuberculosis serotype O:3 (strain YPIII).